Reading from the N-terminus, the 386-residue chain is Patatin group M-3 (386 aa).

An N-terminal signal peptide occupies residues 1–23 (MATTKSFLILFFMILATTSSTCA). In terms of domain architecture, PNPLA spans 32-229 (LSIDGGGIKG…TVGDPALLSL (198 aa)). The short motif at 36 to 41 (GGGIKG) is the GXGXXG element. The GXSXG signature appears at 75–79 (GTSTG). Residue serine 77 is the Nucleophile of the active site. Residue asparagine 115 is glycosylated (N-linked (GlcNAc...) asparagine). The Proton acceptor role is filled by aspartate 215. A DGA/G motif is present at residues 215 to 217 (DGG). The stretch at 321 to 384 (ENALTGTTTE…DRKKLRANKA (64 aa)) forms a coiled coil.

It belongs to the patatin family. In terms of tissue distribution, tuber.

It localises to the vacuole. In terms of biological role, probable lipolytic acyl hydrolase (LAH), an activity which is thought to be involved in the response of tubers to pathogens. The sequence is that of Patatin group M-3 from Solanum tuberosum (Potato).